We begin with the raw amino-acid sequence, 261 residues long: MTASSPSIRVTDLSYSVAGRELLSKLKFHLQSGEMLAVLGRNGAGKSTLLKHLTGELGKSGVELFGQPLRDIKPAEAAKRRAVLPQQTPLSFAYEVLDVVLLGRIPHGQRETVQDRAIAAACLERVGLSGYETRDVLTLSGGEQQRVHFARTLAQLHGVIGERVLLLDEPTASLDLAHQHATLRLARELCREGVGVLAVLHDLNLAAQYADRVLMLAEGHVIACDHPAVALTPESIRTAYGHEVLVTQHPCLNCPLIVSAS.

In terms of domain architecture, ABC transporter spans 8–243; the sequence is IRVTDLSYSV…ESIRTAYGHE (236 aa). 40–47 is a binding site for ATP; it reads GRNGAGKS.

This sequence belongs to the ABC transporter superfamily. Heme (hemin) importer (TC 3.A.1.14.5) family. As to quaternary structure, the complex is composed of two ATP-binding proteins (HmuV), two transmembrane proteins (HmuU) and a solute-binding protein (HmuT).

The protein resides in the cell membrane. Its function is as follows. Part of the ABC transporter complex HmuTUV involved in hemin import. Responsible for energy coupling to the transport system. The protein is Hemin import ATP-binding protein HmuV of Deinococcus radiodurans (strain ATCC 13939 / DSM 20539 / JCM 16871 / CCUG 27074 / LMG 4051 / NBRC 15346 / NCIMB 9279 / VKM B-1422 / R1).